Here is a 414-residue protein sequence, read N- to C-terminus: Serine hydroxymethyltransferase (414 aa).

Residues Leu121 and 125 to 127 (GHL) contribute to the (6S)-5,6,7,8-tetrahydrofolate site. Lys229 is subject to N6-(pyridoxal phosphate)lysine.

It belongs to the SHMT family. Homodimer. Pyridoxal 5'-phosphate serves as cofactor.

It localises to the cytoplasm. It carries out the reaction (6R)-5,10-methylene-5,6,7,8-tetrahydrofolate + glycine + H2O = (6S)-5,6,7,8-tetrahydrofolate + L-serine. Its pathway is one-carbon metabolism; tetrahydrofolate interconversion. It functions in the pathway amino-acid biosynthesis; glycine biosynthesis; glycine from L-serine: step 1/1. In terms of biological role, catalyzes the reversible interconversion of serine and glycine with tetrahydrofolate (THF) serving as the one-carbon carrier. This reaction serves as the major source of one-carbon groups required for the biosynthesis of purines, thymidylate, methionine, and other important biomolecules. Also exhibits THF-independent aldolase activity toward beta-hydroxyamino acids, producing glycine and aldehydes, via a retro-aldol mechanism. This chain is Serine hydroxymethyltransferase, found in Variovorax paradoxus (strain S110).